Here is a 278-residue protein sequence, read N- to C-terminus: S-formylglutathione hydrolase YeiG (278 aa).

Active-site charge relay system residues include S145, D223, and H256.

It belongs to the esterase D family.

It carries out the reaction S-formylglutathione + H2O = formate + glutathione + H(+). In terms of biological role, serine hydrolase involved in the detoxification of formaldehyde. Hydrolyzes S-formylglutathione to glutathione and formate. The polypeptide is S-formylglutathione hydrolase YeiG (yeiG) (Escherichia coli (strain SMS-3-5 / SECEC)).